Consider the following 463-residue polypeptide: Probable ECA polymerase (463 aa).

The next 11 membrane-spanning stretches (helical) occupy residues 6 to 26 (FGGL…LTWM), 39 to 59 (FSLL…VLVF), 65 to 85 (VVPV…YAVY), 112 to 132 (ANLT…IFFL), 154 to 174 (GVAL…VYFL), 180 to 200 (AWLL…VIVG), 201 to 221 (GTRA…IVRG), 222 to 242 (WITL…MFWL), 340 to 360 (LVVM…GLVI), 377 to 397 (YKAA…IVLT), and 408 to 428 (VVFF…LYWL).

The protein belongs to the WzyE family. In terms of assembly, probably part of a complex composed of WzxE, WzyE and WzzE.

The protein resides in the cell inner membrane. The protein operates within bacterial outer membrane biogenesis; enterobacterial common antigen biosynthesis. Functionally, probably involved in the polymerization of enterobacterial common antigen (ECA) trisaccharide repeat units. The polypeptide is Probable ECA polymerase (Pectobacterium atrosepticum (strain SCRI 1043 / ATCC BAA-672) (Erwinia carotovora subsp. atroseptica)).